The following is a 79-amino-acid chain: UPF0291 protein SAV1341 (79 aa).

Residues 56 to 79 are disordered; it reads IDPEGNDVTPEKIKEIQQKRDNKN. Residues 64–79 show a composition bias toward basic and acidic residues; that stretch reads TPEKIKEIQQKRDNKN.

The protein belongs to the UPF0291 family.

Its subcellular location is the cytoplasm. In Staphylococcus aureus (strain Mu50 / ATCC 700699), this protein is UPF0291 protein SAV1341.